The chain runs to 208 residues: Protein-L-isoaspartate O-methyltransferase (208 aa).

S59 is an active-site residue.

This sequence belongs to the methyltransferase superfamily. L-isoaspartyl/D-aspartyl protein methyltransferase family.

It is found in the cytoplasm. The catalysed reaction is [protein]-L-isoaspartate + S-adenosyl-L-methionine = [protein]-L-isoaspartate alpha-methyl ester + S-adenosyl-L-homocysteine. Functionally, catalyzes the methyl esterification of L-isoaspartyl residues in peptides and proteins that result from spontaneous decomposition of normal L-aspartyl and L-asparaginyl residues. It plays a role in the repair and/or degradation of damaged proteins. This is Protein-L-isoaspartate O-methyltransferase from Salmonella newport (strain SL254).